Consider the following 246-residue polypeptide: DNA repair protein RecO (246 aa).

This sequence belongs to the RecO family.

In terms of biological role, involved in DNA repair and RecF pathway recombination. This is DNA repair protein RecO from Proteus mirabilis (strain HI4320).